The chain runs to 125 residues: Protein ApaG (125 aa).

The 125-residue stretch at 1–125 (MINAPRVCVQ…FRLAIPSLIH (125 aa)) folds into the ApaG domain.

In Pectobacterium atrosepticum (strain SCRI 1043 / ATCC BAA-672) (Erwinia carotovora subsp. atroseptica), this protein is Protein ApaG.